Reading from the N-terminus, the 443-residue chain is DNA double-strand break repair protein Mre11 (443 aa).

Mn(2+)-binding residues include Asp8, His10, Asp49, and Asn84. His85 functions as the Proton donor in the catalytic mechanism. Residues His169, His201, and His203 each coordinate Mn(2+). Positions Gln382–Arg429 are disordered. Over residues Thr395–Lys423 the composition is skewed to basic and acidic residues.

It belongs to the MRE11/RAD32 family. Homodimer. Forms a heterotetramer composed of two Mre11 subunits and two Rad50 subunits. It depends on Mn(2+) as a cofactor.

Nuclease activity is regulated by Rad50. In terms of biological role, part of the Rad50/Mre11 complex, which is involved in the early steps of DNA double-strand break (DSB) repair. The complex may facilitate opening of the processed DNA ends to aid in the recruitment of HerA and NurA. Mre11 binds to DSB ends and has both double-stranded 3'-5' exonuclease activity and single-stranded endonuclease activity. The sequence is that of DNA double-strand break repair protein Mre11 from Archaeoglobus fulgidus (strain ATCC 49558 / DSM 4304 / JCM 9628 / NBRC 100126 / VC-16).